Here is a 90-residue protein sequence, read N- to C-terminus: Lectin-1 (90 aa).

A Pyrrolidone carboxylic acid modification is found at Gln1. Cysteines 46 and 71 form a disulfide.

Post-translationally, the N-terminus is blocked. In terms of processing, contains seven disulfide bonds. Proteolytically cleaved. Major form may consist of cleaved, disulfide-bonded subunits.

In terms of biological role, lectin with specificity for complex N-linked glycans and O-linked glycans. Has hemagglutinating activity towards rabbit erythrocytes that is inhibited by N-acetyl-D-galactosamine. This Hypnea cervicornis (Brazilian red alga) protein is Lectin-1.